A 31-amino-acid chain; its full sequence is Ice-structuring glycoprotein 3 (31 aa).

10 O-linked (GalNAc...) threonine glycosylation sites follow: Thr3, Thr6, Thr9, Thr12, Thr15, Thr18, Thr21, Thr24, Thr27, and Thr30.

In terms of processing, O-linked glycans consist of Gal-GalNAc disaccharides. The three proteins may differ only in the number of repeating units of -Ala-Ala-Thr-.

The protein resides in the secreted. In terms of biological role, antifreeze proteins lower the blood freezing point. This fish lives in antarctic waters where it experiences water temperatures near -1.9 degrees Celsius. Its blood has a freezing point of about -2.0 degrees Celsius, and 30% of the freezing-point depression is due mainly to the 3 major high molecular weight glycoproteins in the plasma. This Pagothenia borchgrevinki (Bald rockcod) protein is Ice-structuring glycoprotein 3.